The following is a 455-amino-acid chain: Bifunctional protein GlmU (455 aa).

Residues 1 to 230 form a pyrophosphorylase region; that stretch reads MANRFAVILA…FDETIGINDR (230 aa). Residues 9–12, K23, Q73, and 78–79 each bind UDP-N-acetyl-alpha-D-glucosamine; these read LAAG and GT. Position 103 (D103) interacts with Mg(2+). Residues G140, E155, N170, and N228 each contribute to the UDP-N-acetyl-alpha-D-glucosamine site. N228 contributes to the Mg(2+) binding site. The segment at 231-251 is linker; the sequence is IALAEAEKIMKKRINEQHMRN. The tract at residues 252 to 455 is N-acetyltransferase; that stretch reads GVSIIDPEQT…KEEYASKFKK (204 aa). Residues R333 and K351 each coordinate UDP-N-acetyl-alpha-D-glucosamine. Residue H363 is the Proton acceptor of the active site. UDP-N-acetyl-alpha-D-glucosamine-binding residues include Y366 and N377. Residues 386 to 387, A423, and R440 contribute to the acetyl-CoA site; that span reads NY.

It in the N-terminal section; belongs to the N-acetylglucosamine-1-phosphate uridyltransferase family. This sequence in the C-terminal section; belongs to the transferase hexapeptide repeat family. As to quaternary structure, homotrimer. It depends on Mg(2+) as a cofactor.

It is found in the cytoplasm. It carries out the reaction alpha-D-glucosamine 1-phosphate + acetyl-CoA = N-acetyl-alpha-D-glucosamine 1-phosphate + CoA + H(+). It catalyses the reaction N-acetyl-alpha-D-glucosamine 1-phosphate + UTP + H(+) = UDP-N-acetyl-alpha-D-glucosamine + diphosphate. It functions in the pathway nucleotide-sugar biosynthesis; UDP-N-acetyl-alpha-D-glucosamine biosynthesis; N-acetyl-alpha-D-glucosamine 1-phosphate from alpha-D-glucosamine 6-phosphate (route II): step 2/2. It participates in nucleotide-sugar biosynthesis; UDP-N-acetyl-alpha-D-glucosamine biosynthesis; UDP-N-acetyl-alpha-D-glucosamine from N-acetyl-alpha-D-glucosamine 1-phosphate: step 1/1. The protein operates within bacterial outer membrane biogenesis; LPS lipid A biosynthesis. Catalyzes the last two sequential reactions in the de novo biosynthetic pathway for UDP-N-acetylglucosamine (UDP-GlcNAc). The C-terminal domain catalyzes the transfer of acetyl group from acetyl coenzyme A to glucosamine-1-phosphate (GlcN-1-P) to produce N-acetylglucosamine-1-phosphate (GlcNAc-1-P), which is converted into UDP-GlcNAc by the transfer of uridine 5-monophosphate (from uridine 5-triphosphate), a reaction catalyzed by the N-terminal domain. The polypeptide is Bifunctional protein GlmU (Oceanobacillus iheyensis (strain DSM 14371 / CIP 107618 / JCM 11309 / KCTC 3954 / HTE831)).